A 132-amino-acid chain; its full sequence is Histone H2A (132 aa).

Residues Met-1–Ser-13 show a composition bias toward basic residues. The interval Met-1–Lys-21 is disordered.

It belongs to the histone H2A family. The nucleosome is a histone octamer containing two molecules each of H2A, H2B, H3 and H4 assembled in one H3-H4 heterotetramer and two H2A-H2B heterodimers. The octamer wraps approximately 147 bp of DNA.

The protein resides in the nucleus. The protein localises to the chromosome. Its function is as follows. Core component of nucleosome. Nucleosomes wrap and compact DNA into chromatin, limiting DNA accessibility to the cellular machineries which require DNA as a template. Histones thereby play a central role in transcription regulation, DNA repair, DNA replication and chromosomal stability. DNA accessibility is regulated via a complex set of post-translational modifications of histones, also called histone code, and nucleosome remodeling. This chain is Histone H2A, found in Plasmodium falciparum.